Consider the following 449-residue polypeptide: Tubulin alpha-1C chain (449 aa).

Positions 1–4 (MREC) match the MREC motif motif. Gln-11 lines the GTP pocket. Residue Lys-40 is modified to N6-acetyllysine. Positions 71, 140, 144, 145, 179, 206, and 228 each coordinate GTP. Glu-71 serves as a coordination point for Mg(2+). Residue Glu-254 is part of the active site. 3'-nitrotyrosine is present on Tyr-282. The interval 429–449 (EKDYEEVGADSADGEDEGEEY) is disordered. The segment covering 431–449 (DYEEVGADSADGEDEGEEY) has biased composition (acidic residues). Position 432 is a phosphotyrosine (Tyr-432). Phosphoserine is present on Ser-439. Tyr-449 carries the post-translational modification 3'-nitrotyrosine.

The protein belongs to the tubulin family. In terms of assembly, dimer of alpha and beta chains. A typical microtubule is a hollow water-filled tube with an outer diameter of 25 nm and an inner diameter of 15 nM. Alpha-beta heterodimers associate head-to-tail to form protofilaments running lengthwise along the microtubule wall with the beta-tubulin subunit facing the microtubule plus end conferring a structural polarity. Microtubules usually have 13 protofilaments but different protofilament numbers can be found in some organisms and specialized cells. It depends on Mg(2+) as a cofactor. Some glutamate residues at the C-terminus are polyglutamylated, resulting in polyglutamate chains on the gamma-carboxyl group. Polyglutamylation plays a key role in microtubule severing by spastin (SPAST). SPAST preferentially recognizes and acts on microtubules decorated with short polyglutamate tails: severing activity by SPAST increases as the number of glutamates per tubulin rises from one to eight, but decreases beyond this glutamylation threshold. Glutamylation is also involved in cilia motility. In terms of processing, some glutamate residues at the C-terminus are monoglycylated but not polyglycylated due to the absence of functional TTLL10 in human. Monoglycylation is mainly limited to tubulin incorporated into cilia and flagella axonemes, which is required for their stability and maintenance. Flagella glycylation controls sperm motility. Both polyglutamylation and monoglycylation can coexist on the same protein on adjacent residues, and lowering glycylation levels increases polyglutamylation, and reciprocally. Post-translationally, acetylation of alpha chains at Lys-40 is located inside the microtubule lumen. This modification has been correlated with increased microtubule stability, intracellular transport and ciliary assembly. Methylation of alpha chains at Lys-40 is found in mitotic microtubules and is required for normal mitosis and cytokinesis contributing to genomic stability. In terms of processing, nitration of Tyr-449 is irreversible and interferes with normal dynein intracellular distribution. Post-translationally, undergoes a tyrosination/detyrosination cycle, the cyclic removal and re-addition of a C-terminal tyrosine residue by the enzymes tubulin tyrosine carboxypeptidase (MATCAP1/KIAA0895L, VASH1 or VASH2) and tubulin tyrosine ligase (TTL), respectively. Tyrosination promotes microtubule interaction with CAP-Gly domain-containing proteins such as CLIP1, CLIP2 and DCTN1. Tyrosination regulates the initiation of dynein-dynactin motility via interaction with DCTN1, which brings the dynein-dynactin complex into contact with microtubules. In neurons, tyrosinated tubulins mediate the initiation of retrograde vesicle transport. In terms of processing, detyrosination is involved in metaphase plate congression by guiding chromosomes during mitosis: detyrosination promotes interaction with CENPE, promoting pole-proximal transport of chromosomes toward the equator. Detyrosination increases microtubules-dependent mechanotransduction in dystrophic cardiac and skeletal muscle. In cardiomyocytes, detyrosinated microtubules are required to resist to contractile compression during contraction: detyrosination promotes association with desmin (DES) at force-generating sarcomeres, leading to buckled microtubules and mechanical resistance to contraction.

It is found in the cytoplasm. It localises to the cytoskeleton. The catalysed reaction is GTP + H2O = GDP + phosphate + H(+). Its function is as follows. Tubulin is the major constituent of microtubules, a cylinder consisting of laterally associated linear protofilaments composed of alpha- and beta-tubulin heterodimers. Microtubules grow by the addition of GTP-tubulin dimers to the microtubule end, where a stabilizing cap forms. Below the cap, tubulin dimers are in GDP-bound state, owing to GTPase activity of alpha-tubulin. The protein is Tubulin alpha-1C chain (TUBA1C) of Homo sapiens (Human).